A 454-amino-acid polypeptide reads, in one-letter code: tRNA modification GTPase MnmE (454 aa).

(6S)-5-formyl-5,6,7,8-tetrahydrofolate-binding residues include Arg-23, Glu-80, and Lys-120. Residues 216–377 (GMKVVIAGRP…LRDHLKQSMG (162 aa)) enclose the TrmE-type G domain. Asn-226 is a K(+) binding site. GTP is bound by residues 226–231 (NAGKSS), 245–251 (TDIAGTT), 270–273 (DTAG), 335–338 (NKAD), and 358–360 (SAR). Residue Ser-230 participates in Mg(2+) binding. K(+) contacts are provided by Thr-245, Ile-247, and Thr-250. Residue Thr-251 coordinates Mg(2+). Lys-454 contributes to the (6S)-5-formyl-5,6,7,8-tetrahydrofolate binding site.

This sequence belongs to the TRAFAC class TrmE-Era-EngA-EngB-Septin-like GTPase superfamily. TrmE GTPase family. Homodimer. Heterotetramer of two MnmE and two MnmG subunits. The cofactor is K(+).

Its subcellular location is the cytoplasm. In terms of biological role, exhibits a very high intrinsic GTPase hydrolysis rate. Involved in the addition of a carboxymethylaminomethyl (cmnm) group at the wobble position (U34) of certain tRNAs, forming tRNA-cmnm(5)s(2)U34. The protein is tRNA modification GTPase MnmE of Yersinia pseudotuberculosis serotype O:1b (strain IP 31758).